The primary structure comprises 142 residues: Large ribosomal subunit protein uL11 (142 aa).

This sequence belongs to the universal ribosomal protein uL11 family. Part of the ribosomal stalk of the 50S ribosomal subunit. Interacts with L10 and the large rRNA to form the base of the stalk. L10 forms an elongated spine to which L12 dimers bind in a sequential fashion forming a multimeric L10(L12)X complex. In terms of processing, one or more lysine residues are methylated.

Its function is as follows. Forms part of the ribosomal stalk which helps the ribosome interact with GTP-bound translation factors. In Bartonella quintana (strain Toulouse) (Rochalimaea quintana), this protein is Large ribosomal subunit protein uL11.